The following is a 298-amino-acid chain: Hydroxymethylglutaryl-CoA lyase, mitochondrial (298 aa).

The Pyruvate carboxyltransferase domain maps to 6–273; it reads VKVVEVGPRD…HTGVDLQKLM (268 aa). Arginine 14 is a binding site for substrate. Aspartate 15 lines the a divalent metal cation pocket. Lysine 21 carries the N6-acetyllysine modification. Histidine 206 and histidine 208 together coordinate a divalent metal cation. The active site involves cysteine 239. An a divalent metal cation-binding site is contributed by asparagine 248. The Microbody targeting signal signature appears at 296-298; sequence CRL.

This sequence belongs to the HMG-CoA lyase family. In terms of assembly, homodimer; disulfide-linked. Can also form homotetramers.

Its subcellular location is the mitochondrion matrix. It is found in the peroxisome. It carries out the reaction (3S)-3-hydroxy-3-methylglutaryl-CoA = acetoacetate + acetyl-CoA. Its pathway is metabolic intermediate metabolism; (S)-3-hydroxy-3-methylglutaryl-CoA degradation; acetoacetate from (S)-3-hydroxy-3-methylglutaryl-CoA: step 1/1. Mitochondrial 3-hydroxy-3-methylglutaryl-CoA lyase that catalyzes a cation-dependent cleavage of (S)-3-hydroxy-3-methylglutaryl-CoA into acetyl-CoA and acetoacetate, a key step in ketogenesis. Terminal step in leucine catabolism. Ketone bodies (beta-hydroxybutyrate, acetoacetate and acetone) are essential as an alternative source of energy to glucose, as lipid precursors and as regulators of metabolism. This chain is Hydroxymethylglutaryl-CoA lyase, mitochondrial (HMGCL), found in Gallus gallus (Chicken).